A 637-amino-acid chain; its full sequence is Serine/threonine protein kinase ypkA (637 aa).

Residues Thr-20–Thr-29 show a composition bias toward low complexity. Disordered regions lie at residues Thr-20–Ser-63 and Ser-104–Ala-140. A compositionally biased stretch (polar residues) spans Val-40 to Leu-61. Positions Ser-104 to Ser-116 are enriched in low complexity. The segment covering Thr-117 to Gly-136 has biased composition (polar residues). Residues Phe-294–Phe-551 enclose the Protein kinase domain. ATP is bound by residues Val-300 to Val-308 and Lys-323. Catalysis depends on Asp-417, which acts as the Proton acceptor. Residues Ala-552–Ala-623 enclose the AGC-kinase C-terminal domain. 2 positions are modified to phosphoserine: Ser-593 and Ser-612. Tyr-613 is modified (phosphotyrosine).

This sequence belongs to the protein kinase superfamily. Ser/Thr protein kinase family. Interacts with the sakA MAP kinase.

It catalyses the reaction L-seryl-[protein] + ATP = O-phospho-L-seryl-[protein] + ADP + H(+). It carries out the reaction L-threonyl-[protein] + ATP = O-phospho-L-threonyl-[protein] + ADP + H(+). In terms of biological role, serine/threonine protein kinase required for vegetative growth and conidiation. Important for fungal survival through the regulation of glycosphingolipid (GSL) biosynthesis and cross talks with MAP kinase pathways such as the cell wall integrity (CWI) and the high osmolarity glycerol (HOG) pathways. The polypeptide is Serine/threonine protein kinase ypkA (Aspergillus fumigatus (strain ATCC MYA-4609 / CBS 101355 / FGSC A1100 / Af293) (Neosartorya fumigata)).